Reading from the N-terminus, the 160-residue chain is Cytochrome b6-f complex subunit 4 (160 aa).

3 consecutive transmembrane segments (helical) span residues 36–56 (ILYM…GLSI), 95–115 (LVGV…PFIE), and 127–147 (PIAT…GIGA).

The protein belongs to the cytochrome b family. PetD subfamily. In terms of assembly, the 4 large subunits of the cytochrome b6-f complex are cytochrome b6, subunit IV (17 kDa polypeptide, petD), cytochrome f and the Rieske protein, while the 4 small subunits are petG, petL, petM and petN. The complex functions as a dimer.

The protein resides in the plastid. It is found in the chloroplast thylakoid membrane. In terms of biological role, component of the cytochrome b6-f complex, which mediates electron transfer between photosystem II (PSII) and photosystem I (PSI), cyclic electron flow around PSI, and state transitions. This Gracilaria tenuistipitata var. liui (Red alga) protein is Cytochrome b6-f complex subunit 4.